The chain runs to 72 residues: UPF0270 protein KPK_0377 (72 aa).

It belongs to the UPF0270 family.

The polypeptide is UPF0270 protein KPK_0377 (Klebsiella pneumoniae (strain 342)).